The sequence spans 195 residues: dITP/XTP pyrophosphatase (195 aa).

8 to 13 (TNNQGK) contacts substrate. E39 and D68 together coordinate Mg(2+). The Proton acceptor role is filled by D68. Residues S69, 149–152 (FGYD), K172, and 177–178 (HR) each bind substrate.

It belongs to the HAM1 NTPase family. As to quaternary structure, homodimer. Requires Mg(2+) as cofactor.

The catalysed reaction is XTP + H2O = XMP + diphosphate + H(+). It catalyses the reaction dITP + H2O = dIMP + diphosphate + H(+). It carries out the reaction ITP + H2O = IMP + diphosphate + H(+). Its function is as follows. Pyrophosphatase that catalyzes the hydrolysis of nucleoside triphosphates to their monophosphate derivatives, with a high preference for the non-canonical purine nucleotides XTP (xanthosine triphosphate), dITP (deoxyinosine triphosphate) and ITP. Seems to function as a house-cleaning enzyme that removes non-canonical purine nucleotides from the nucleotide pool, thus preventing their incorporation into DNA/RNA and avoiding chromosomal lesions. This chain is dITP/XTP pyrophosphatase, found in Staphylococcus epidermidis (strain ATCC 35984 / DSM 28319 / BCRC 17069 / CCUG 31568 / BM 3577 / RP62A).